The following is a 162-amino-acid chain: Putative auxin-responsive protein IAA28 (162 aa).

The 96-residue stretch at 23–118 (SRFVKVFMHG…TVKRIYIVPA (96 aa)) folds into the PB1 domain. The tract at residues 122–141 (NESEYQEEEEDNAAAAATAD) is disordered.

It belongs to the Aux/IAA family. In terms of assembly, homodimers and heterodimers.

Its subcellular location is the nucleus. Aux/IAA proteins are short-lived transcriptional factors that function as repressors of early auxin response genes at low auxin concentrations. The sequence is that of Putative auxin-responsive protein IAA28 (IAA28) from Oryza sativa subsp. japonica (Rice).